The sequence spans 146 residues: Snaclec 5 (146 aa).

A signal peptide spans 1-23 (MGRFIFISFGLLVVFLSLSGTEA). Disulfide bonds link cysteine 25-cysteine 36, cysteine 53-cysteine 142, and cysteine 119-cysteine 134. Residues 32-143 (YEGHCYRVFD…CRNYGHFVCK (112 aa)) form the C-type lectin domain.

Belongs to the snaclec family. As to quaternary structure, heterodimer; disulfide-linked. In terms of tissue distribution, expressed by the venom gland.

Its subcellular location is the secreted. Interferes with one step of hemostasis (modulation of platelet aggregation, or coagulation cascade, for example). The chain is Snaclec 5 from Echis pyramidum leakeyi (Leakey's carpet viper).